Here is a 166-residue protein sequence, read N- to C-terminus: Transcription antitermination protein NusB (166 aa).

Basic and acidic residues predominate over residues 1–18; that stretch reads MISDESDRFNPRDPKPAD. The tract at residues 1–28 is disordered; that stretch reads MISDESDRFNPRDPKPADAGKPSKSAKR.

It belongs to the NusB family.

Functionally, involved in transcription antitermination. Required for transcription of ribosomal RNA (rRNA) genes. Binds specifically to the boxA antiterminator sequence of the ribosomal RNA (rrn) operons. In Pseudomonas putida (strain W619), this protein is Transcription antitermination protein NusB.